The chain runs to 874 residues: Lon protease (874 aa).

The Lon N-terminal domain maps to leucine 18–leucine 261. Disordered stretches follow at residues valine 47–serine 68, glycine 120–glycine 144, and leucine 298–aspartate 318. The segment covering proline 124–glycine 142 has biased composition (low complexity). Residue glycine 430–threonine 437 coordinates ATP. Residues threonine 667–proline 851 enclose the Lon proteolytic domain. Residues serine 757 and lysine 800 contribute to the active site. Residues phenylalanine 853 to alanine 874 form a disordered region.

This sequence belongs to the peptidase S16 family. In terms of assembly, homohexamer. Organized in a ring with a central cavity.

The protein resides in the cytoplasm. It catalyses the reaction Hydrolysis of proteins in presence of ATP.. ATP-dependent serine protease that mediates the selective degradation of mutant and abnormal proteins as well as certain short-lived regulatory proteins. Required for cellular homeostasis and for survival from DNA damage and developmental changes induced by stress. Degrades polypeptides processively to yield small peptide fragments that are 5 to 10 amino acids long. Binds to DNA in a double-stranded, site-specific manner. In Frankia alni (strain DSM 45986 / CECT 9034 / ACN14a), this protein is Lon protease.